Reading from the N-terminus, the 390-residue chain is Succinate--CoA ligase [ADP-forming] subunit beta (390 aa).

An ATP-grasp domain is found at 9-248; the sequence is KDILRKFGVT…TSEEDPFEVE (240 aa). ATP contacts are provided by residues Lys-50, 57–59, Glu-103, Met-106, and Glu-111; that span reads GRG. Mg(2+) is bound by residues Asn-203 and Asp-217. Residues Asn-268 and 325–327 contribute to the substrate site; that span reads GIV.

It belongs to the succinate/malate CoA ligase beta subunit family. As to quaternary structure, heterotetramer of two alpha and two beta subunits. It depends on Mg(2+) as a cofactor.

The catalysed reaction is succinate + ATP + CoA = succinyl-CoA + ADP + phosphate. It carries out the reaction GTP + succinate + CoA = succinyl-CoA + GDP + phosphate. It participates in carbohydrate metabolism; tricarboxylic acid cycle; succinate from succinyl-CoA (ligase route): step 1/1. Functionally, succinyl-CoA synthetase functions in the citric acid cycle (TCA), coupling the hydrolysis of succinyl-CoA to the synthesis of either ATP or GTP and thus represents the only step of substrate-level phosphorylation in the TCA. The beta subunit provides nucleotide specificity of the enzyme and binds the substrate succinate, while the binding sites for coenzyme A and phosphate are found in the alpha subunit. This Chlorobium chlorochromatii (strain CaD3) protein is Succinate--CoA ligase [ADP-forming] subunit beta.